We begin with the raw amino-acid sequence, 97 residues long: Carboxypeptidase inhibitor (97 aa).

The first 22 residues, 1 to 22, serve as a signal peptide directing secretion; the sequence is MAATLPVFAVVFFAMVLASSQA.

The protein localises to the secreted. Its function is as follows. Potent competitive inhibitor of metallo-carboxypeptidases CPA1, CPA2, CPB, CPN, and TAF1a. Also inhibits human CPA4. Accelerates fibrinolysis in vitro and may contribute to the maintenance of host blood liquidity during feeding. The chain is Carboxypeptidase inhibitor from Rhipicephalus bursa (Tick).